The sequence spans 426 residues: Serine--tRNA ligase (426 aa).

Residue 229–231 (TAE) participates in L-serine binding. 260 to 262 (RSE) contacts ATP. Position 283 (E283) interacts with L-serine. 347–350 (EIAS) lines the ATP pocket. L-serine is bound at residue S383.

Belongs to the class-II aminoacyl-tRNA synthetase family. Type-1 seryl-tRNA synthetase subfamily. In terms of assembly, homodimer. The tRNA molecule binds across the dimer.

It is found in the cytoplasm. The catalysed reaction is tRNA(Ser) + L-serine + ATP = L-seryl-tRNA(Ser) + AMP + diphosphate + H(+). It carries out the reaction tRNA(Sec) + L-serine + ATP = L-seryl-tRNA(Sec) + AMP + diphosphate + H(+). Its pathway is aminoacyl-tRNA biosynthesis; selenocysteinyl-tRNA(Sec) biosynthesis; L-seryl-tRNA(Sec) from L-serine and tRNA(Sec): step 1/1. In terms of biological role, catalyzes the attachment of serine to tRNA(Ser). Is also able to aminoacylate tRNA(Sec) with serine, to form the misacylated tRNA L-seryl-tRNA(Sec), which will be further converted into selenocysteinyl-tRNA(Sec). In Rickettsia bellii (strain RML369-C), this protein is Serine--tRNA ligase.